The chain runs to 248 residues: Ribonuclease PH (248 aa).

Phosphate contacts are provided by residues Arg-86 and 124–126 (GTR).

It belongs to the RNase PH family. Homohexameric ring arranged as a trimer of dimers.

The catalysed reaction is tRNA(n+1) + phosphate = tRNA(n) + a ribonucleoside 5'-diphosphate. Phosphorolytic 3'-5' exoribonuclease that plays an important role in tRNA 3'-end maturation. Removes nucleotide residues following the 3'-CCA terminus of tRNAs; can also add nucleotides to the ends of RNA molecules by using nucleoside diphosphates as substrates, but this may not be physiologically important. Probably plays a role in initiation of 16S rRNA degradation (leading to ribosome degradation) during starvation. This chain is Ribonuclease PH, found in Clostridium perfringens (strain 13 / Type A).